The sequence spans 378 residues: Mannitol-1-phosphate 5-dehydrogenase (378 aa).

NAD(+) is bound at residue 4 to 15; the sequence is SVHFGAGNIGRG.

The protein belongs to the mannitol dehydrogenase family.

It carries out the reaction D-mannitol 1-phosphate + NAD(+) = beta-D-fructose 6-phosphate + NADH + H(+). The sequence is that of Mannitol-1-phosphate 5-dehydrogenase from Streptococcus pneumoniae (strain ATCC 700669 / Spain 23F-1).